The following is a 256-amino-acid chain: Geranylgeranylglyceryl phosphate synthase (256 aa).

Mg(2+) contacts are provided by aspartate 28 and serine 53. Sn-glycerol 1-phosphate-binding positions include 172–178 (YLEAGSG), 203–204 (GG), and 225–226 (GT).

This sequence belongs to the GGGP/HepGP synthase family. Group II subfamily. Mg(2+) is required as a cofactor.

The protein resides in the cytoplasm. It carries out the reaction sn-glycerol 1-phosphate + (2E,6E,10E)-geranylgeranyl diphosphate = sn-3-O-(geranylgeranyl)glycerol 1-phosphate + diphosphate. It participates in membrane lipid metabolism; glycerophospholipid metabolism. In terms of biological role, prenyltransferase that catalyzes the transfer of the geranylgeranyl moiety of geranylgeranyl diphosphate (GGPP) to the C3 hydroxyl of sn-glycerol-1-phosphate (G1P). This reaction is the first ether-bond-formation step in the biosynthesis of archaeal membrane lipids. This Methanococcus maripaludis (strain C7 / ATCC BAA-1331) protein is Geranylgeranylglyceryl phosphate synthase.